A 176-amino-acid chain; its full sequence is Large ribosomal subunit protein uL6 (176 aa).

Belongs to the universal ribosomal protein uL6 family. Part of the 50S ribosomal subunit.

Functionally, this protein binds to the 23S rRNA, and is important in its secondary structure. It is located near the subunit interface in the base of the L7/L12 stalk, and near the tRNA binding site of the peptidyltransferase center. The chain is Large ribosomal subunit protein uL6 from Lactobacillus acidophilus (strain ATCC 700396 / NCK56 / N2 / NCFM).